Consider the following 359-residue polypeptide: Putative gluconeogenesis factor (359 aa).

The tract at residues Val-317 to Arg-359 is disordered.

This sequence belongs to the gluconeogenesis factor family.

The protein localises to the cytoplasm. Functionally, required for morphogenesis under gluconeogenic growth conditions. In Mycobacterium leprae (strain TN), this protein is Putative gluconeogenesis factor.